Reading from the N-terminus, the 136-residue chain is Succinate dehydrogenase 2 membrane subunit SdhC (136 aa).

3 helical membrane passes run 32 to 52, 70 to 90, and 109 to 129; these read RISG…AAML, IVGL…LNGI, and LWII…VVGI. A heme-binding site is contributed by H85.

This sequence belongs to the cytochrome b560 family. Part of an enzyme complex containing four subunits: a flavoprotein (SdhA), an iron-sulfur protein (SdhB), plus two membrane-anchoring proteins (SdhC and SdhD). Heme is required as a cofactor.

The protein localises to the cell membrane. Functionally, membrane-anchoring subunit of succinate dehydrogenase 2 (Sdh2). Sdh2 may catalyze the two-electron oxidation of succinate to fumarate with a corresponding reduction of quinone to quinol under low oxygen conditions, when the primary aerobic succinate dehydrogenase (Sdh1) is inhibited. Sdh2 seems to be the generator of the proton motive force (PMF) under hypoxia. This is Succinate dehydrogenase 2 membrane subunit SdhC from Mycobacterium tuberculosis (strain ATCC 25618 / H37Rv).